The following is a 152-amino-acid chain: Methylglyoxal synthase (152 aa).

The region spanning 6 to 152 is the MGS-like domain; that stretch reads RTMATAKNIA…YQHYLNGRLK (147 aa). Substrate-binding positions include H19, K23, 45-48, and 65-66; these read TGTT and SG. Catalysis depends on D71, which acts as the Proton donor/acceptor. Residue H98 coordinates substrate.

It belongs to the methylglyoxal synthase family.

The catalysed reaction is dihydroxyacetone phosphate = methylglyoxal + phosphate. In terms of biological role, catalyzes the formation of methylglyoxal from dihydroxyacetone phosphate. This Photorhabdus laumondii subsp. laumondii (strain DSM 15139 / CIP 105565 / TT01) (Photorhabdus luminescens subsp. laumondii) protein is Methylglyoxal synthase.